Reading from the N-terminus, the 249-residue chain is Meiotic drive suppressor wtf25 (249 aa).

The tract at residues 1–40 (MKNNYTSLKSPLDEEDELKTDHEIDLEKGPLPEYDSEEEG) is disordered. Residues 19 to 30 (KTDHEIDLEKGP) show a composition bias toward basic and acidic residues. Helical transmembrane passes span 73–93 (LLII…PAFC), 110–130 (WTLF…LTYF), 151–170 (NMIF…LKAE), and 187–207 (SASA…AETV).

Belongs to the WTF family. In terms of assembly, homomer. Interacts with other proteins that exhibit high sequence similarity.

Its subcellular location is the spore membrane. The protein localises to the vacuole membrane. Functionally, acts as a suppressor component of the dual wtf meiotic drive system, and can suppress but not confer meiotic drive by compatible poisons. Wtf meiotic drive systems promote unequal transmission of alleles from the parental zygote to progeny spores by encoding a poison and an antidote from the same locus; the poison is trans-acting and forms toxic aggregates in all spores within an ascus, wherease the antidote is spore-specific and targets aggregates for degradation by the vacuole. Meiotic drive by wtf systems therefore lead to poisoning of all progeny that do not inherit the dual poison/antidote allele, or express a compatible antidote. This Schizosaccharomyces pombe (strain 972 / ATCC 24843) (Fission yeast) protein is Meiotic drive suppressor wtf25.